Reading from the N-terminus, the 213-residue chain is Protein MobE (213 aa).

This chain is Protein MobE (mobE), found in Acidithiobacillus ferrooxidans (Thiobacillus ferrooxidans).